We begin with the raw amino-acid sequence, 412 residues long: Non-specific lipid-transfer protein-like 2 (412 aa).

The Microbody targeting signal motif lies at 410–412 (SKI).

Belongs to the thiolase-like superfamily. Thiolase family. As to expression, expressed in intestine, hypodermis and body-wall muscle.

The protein localises to the peroxisome. The enzyme catalyses choloyl-CoA + propanoyl-CoA = 3alpha,7alpha,12alpha-trihydroxy-24-oxo-5beta-cholestan-26-oyl-CoA + CoA. Inhibited by acetyl-CoA. In terms of biological role, catalyzes the thiolytic cleavage of 3-ketoacyl-CoA with 8-16 carbon residues in the acyl group using a ping-pong mechanism whereby binding to 3-ketooctanoyl-CoA results in the release of acetyl-CoA and the subsequent addition of CoA produces 3-ketohexanohyl-CoA. Involved in the biosynthesis of the dauer pheromone by providing short chains of fatty acid that are attached to the ascarylose sugars of the pheromone. This Caenorhabditis elegans protein is Non-specific lipid-transfer protein-like 2.